The following is a 199-amino-acid chain: Transcriptional regulatory protein DesR (199 aa).

Positions 3–117 (SIFIAEDQQM…ELANAIRSVM (115 aa)) constitute a Response regulatory domain. Aspartate 54 is subject to 4-aspartylphosphate. One can recognise an HTH luxR-type domain in the interval 131-196 (LYSEANPLTD…EAITRSKEKG (66 aa)). Positions 155–174 (TKEIAQELSIKSGTVRNYIS) form a DNA-binding region, H-T-H motif.

In terms of processing, phosphorylated by DesK.

It is found in the cytoplasm. In terms of biological role, member of the two-component regulatory system DesR/DesK, responsible for cold induction of the des gene coding for the Delta5 acyl-lipid desaturase. This Bacillus subtilis (strain 168) protein is Transcriptional regulatory protein DesR (desR).